Consider the following 320-residue polypeptide: Lactamase-like protein GME11357 (320 aa).

Residues His106, His108, Asp110, and His111 each contribute to the Zn(2+) site. The active-site Proton donor/acceptor is the Asp110.

It belongs to the metallo-beta-lactamase superfamily. Zn(2+) serves as cofactor.

Its pathway is secondary metabolite biosynthesis. Its function is as follows. Lactamase-like protein; part of the gene cluster that mediates the biosynthesis of dibenzodioxocinones such as pestalotiollide B, a novel class of inhibitors against cholesterol ester transfer protein (CEPT). The biosynthesis initiates from condensation of acetate and malonate units catalyzed by the non-reducing PKS pks8/GME11356. Pks8/GME11356 lacks a thioesterase (TE) domain, which is important to the cyclizing of the third ring of atrochrysone carboxylic acid, and the esterase GME11355 might play the role of TE and catalyzes the cyclization reaction of the C ring. The lactamase-like protein GME11357 (or other beta-lactamases in Pestalotiopsis microspora) probably hydrolyzes the thioester bond between the ACP of pks8/GME11356 and the intermediate to release atrochrysone carboxylic acid, which is spontaneously dehydrates to form endocrocin anthrone. Endocrocin anthrone is further converted to emodin via the endocrocin intermediate. Emodin is then oxidized by several enzymes such as the Baeyer-Villiger oxidase GME11358, the oxidoreductase GME11367, the short chain dehydrogenase/reductase GME11373, as well as by other oxidoreductases from the cluster, to modify the A and C rings and open the B ring, and finally yield monodictyphenone. The prenyltransferase GME11375 may catalyze the addition reaction between the C5 side chains and the carbon bone of dibenzodioxocinones. The remaining biochemical reactions to the final product dibenzodioxocinones should be methylation catalyzed by methyltransferase GME11366 and reduction and lactonization reaction catalyzed by a series of oxidordeuctases. In Pestalotiopsis microspora, this protein is Lactamase-like protein GME11357.